A 147-amino-acid chain; its full sequence is RxLR effector protein Avr3a (147 aa).

The signal sequence occupies residues 1–21 (MRLAIMLSATAVAINFATSSA). The RxLR-dEER motif lies at 44–59 (RLLRKNEENEETSEER). Lys48 bears the N6-acetyllysine mark. Residues 77–147 (ALTERADAKK…YMMHLGLTGY (71 aa)) are effector domain.

Belongs to the RxLR effector family. In terms of assembly, forms homodimers via the RxLR-dEER motif. Interacts with host E3 ligase CMPG1. Interacts with host DRP2. Post-translationally, proteolytically cleaved. The cleavage site directly after the RxLR sequence and the high conservation among other effector proteins suggest that the RxLR motif might play a crucial role in the intracellular processing before secretion. In terms of processing, glycosylated. N-acetylated at Lys-48 after cleavage.

It localises to the secreted. It is found in the host cytoplasm. Multifunctional effector that can suppress host BAK1/SERK3-mediated immunity through at least two different pathways. Manipulates plant immunity by targeting and stabilizing host E3 ligase CMPG1. Preventing the normal 26S proteasome-dependent degradation of potato CMPG1, and thus potentially of its protein substrates in the host cell, further abolishes host cell death during the biotrophic phase of infection. Also associates with and affects the function of the dynamin-related protein 2 (DRP2), a plant GTPase involved in immune receptor-mediated endocytosis. The Avr3a(EM) form evades recognition by R3a, thus does not trigger R3a-mediated hypersensitivity and does not suppress INF1-induced cell death. The chain is RxLR effector protein Avr3a from Phytophthora infestans (Potato late blight agent).